We begin with the raw amino-acid sequence, 68 residues long: Adipokinetic prohormone type 1 (68 aa).

A signal peptide spans 1–20; sequence MNYVSIFVLIVACLCVLADA. Q21 is modified (pyrrolidone carboxylic acid). G30 bears the Glycine amide mark. Positions 34 to 68 are excised as a propeptide; the sequence is GAVAATMSCRSEETIAAIYKLIQNEAERLLLCQKP.

In terms of tissue distribution, expressed in antennal lobe (AL), corpora cardiaca (CC), corpora allata (CA) and gnathal ganglion (GNG) (at protein level). Expression in CC and CA detected in all animals, expression in GNG in some animals and in AL in few animals (at protein level).

Its subcellular location is the secreted. Its function is as follows. This hormone, released from cells in the corpora cardiaca, causes release of diglycerides from the fat body and stimulation of muscles to use these diglycerides as an energy source during energy-demanding processes. The polypeptide is Adipokinetic prohormone type 1 (Agrotis ipsilon (Black cutworm moth)).